Reading from the N-terminus, the 459-residue chain is Bifunctional protein GlmU (459 aa).

Positions 1–229 are pyrophosphorylase; the sequence is MSNFAIILAA…FDESLGVNDR (229 aa). UDP-N-acetyl-alpha-D-glucosamine is bound by residues 8 to 11, Lys22, Gln72, and 77 to 78; these read LAAG and GT. Asp102 contributes to the Mg(2+) binding site. 4 residues coordinate UDP-N-acetyl-alpha-D-glucosamine: Gly139, Glu154, Asn169, and Asn227. Residue Asn227 coordinates Mg(2+). Residues 230–250 are linker; the sequence is VALATAESVMRRRINHKHMVN. The segment at 251–459 is N-acetyltransferase; sequence GVSFVNPEAT…TRLPHHPKNQ (209 aa). Residues Arg332 and Lys350 each coordinate UDP-N-acetyl-alpha-D-glucosamine. Residue His362 is the Proton acceptor of the active site. Residues Tyr365 and Asn376 each contribute to the UDP-N-acetyl-alpha-D-glucosamine site. Acetyl-CoA is bound by residues Ala379, 385–386, Ser404, Ala422, and Arg439; that span reads NY.

In the N-terminal section; belongs to the N-acetylglucosamine-1-phosphate uridyltransferase family. This sequence in the C-terminal section; belongs to the transferase hexapeptide repeat family. As to quaternary structure, homotrimer. Mg(2+) serves as cofactor.

The protein localises to the cytoplasm. The enzyme catalyses alpha-D-glucosamine 1-phosphate + acetyl-CoA = N-acetyl-alpha-D-glucosamine 1-phosphate + CoA + H(+). The catalysed reaction is N-acetyl-alpha-D-glucosamine 1-phosphate + UTP + H(+) = UDP-N-acetyl-alpha-D-glucosamine + diphosphate. It functions in the pathway nucleotide-sugar biosynthesis; UDP-N-acetyl-alpha-D-glucosamine biosynthesis; N-acetyl-alpha-D-glucosamine 1-phosphate from alpha-D-glucosamine 6-phosphate (route II): step 2/2. Its pathway is nucleotide-sugar biosynthesis; UDP-N-acetyl-alpha-D-glucosamine biosynthesis; UDP-N-acetyl-alpha-D-glucosamine from N-acetyl-alpha-D-glucosamine 1-phosphate: step 1/1. The protein operates within bacterial outer membrane biogenesis; LPS lipid A biosynthesis. In terms of biological role, catalyzes the last two sequential reactions in the de novo biosynthetic pathway for UDP-N-acetylglucosamine (UDP-GlcNAc). The C-terminal domain catalyzes the transfer of acetyl group from acetyl coenzyme A to glucosamine-1-phosphate (GlcN-1-P) to produce N-acetylglucosamine-1-phosphate (GlcNAc-1-P), which is converted into UDP-GlcNAc by the transfer of uridine 5-monophosphate (from uridine 5-triphosphate), a reaction catalyzed by the N-terminal domain. The sequence is that of Bifunctional protein GlmU from Streptococcus pneumoniae (strain JJA).